The chain runs to 355 residues: 3'-5' exonuclease (355 aa).

Positions Met-1 to Lys-121 are disordered. Composition is skewed to basic and acidic residues over residues Val-17 to Pro-29, Ala-36 to Thr-50, and Lys-72 to Pro-92. Residues Ser-105 and Ser-113 each carry the phosphoserine modification. One can recognise a 3'-5' exonuclease domain in the interval Val-147–Gln-315. 3 residues coordinate Mg(2+): Asp-164, Glu-166, and Asp-302.

This sequence belongs to the WRNexo family.

Its subcellular location is the nucleus. Functionally, has exonuclease activity on both single-stranded and duplex templates bearing overhangs, but not blunt ended duplex DNA, and cleaves in a 3'-5' direction. Essential for the formation of DNA replication focal centers. Has an important role in maintaining genome stability. In Drosophila ananassae (Fruit fly), this protein is 3'-5' exonuclease.